Here is a 1121-residue protein sequence, read N- to C-terminus: RecBCD enzyme subunit RecC (1121 aa).

It belongs to the RecC family. In terms of assembly, heterotrimer of RecB, RecC and RecD. All subunits contribute to DNA-binding.

In terms of biological role, a helicase/nuclease that prepares dsDNA breaks (DSB) for recombinational DNA repair. Binds to DSBs and unwinds DNA via a highly rapid and processive ATP-dependent bidirectional helicase activity. Unwinds dsDNA until it encounters a Chi (crossover hotspot instigator) sequence from the 3' direction. Cuts ssDNA a few nucleotides 3' to the Chi site. The properties and activities of the enzyme are changed at Chi. The Chi-altered holoenzyme produces a long 3'-ssDNA overhang and facilitates RecA-binding to the ssDNA for homologous DNA recombination and repair. Holoenzyme degrades any linearized DNA that is unable to undergo homologous recombination. In the holoenzyme this subunit recognizes the wild-type Chi sequence, and when added to isolated RecB increases its ATP-dependent helicase processivity. This chain is RecBCD enzyme subunit RecC, found in Haemophilus influenzae (strain ATCC 51907 / DSM 11121 / KW20 / Rd).